A 330-amino-acid polypeptide reads, in one-letter code: MGNLVDNKFTWVIQNFSSSQSRVVPSNQFVIGGCKWRLLVYPEGFNKSGDHLSLFLEVADPRSLPPGWSRHARYLLTIVNQHSDKISKRNEATKWFNQKIPGWGLSAMIPLTKLHAKDGGFLVNDELKIVAEVNVLEVIGKLDVPEESEEETQVTQPMKKVKVDYDHVESNDLMINETPPVSELMDVNGFQVLPSQVDFVKRIFEKHPDIAKDFRPKNPHLRKACMNFLLSLMETLCQPPQKLSNEDLVEADNALTYVKVSGFKVDWLEKKLEEVKKKKEEEQTGEARIQELEEELKEFKQKCLDREAMLEKEKAKVLTARAPLTLDDVI.

The MATH domain maps to 6–133 (DNKFTWVIQN…NDELKIVAEV (128 aa)). A coiled-coil region spans residues 263 to 314 (FKVDWLEKKLEEVKKKKEEEQTGEARIQELEEELKEFKQKCLDREAMLEKEK).

The chain is MATH domain and coiled-coil domain-containing protein At3g58210 from Arabidopsis thaliana (Mouse-ear cress).